Consider the following 368-residue polypeptide: 3-dehydroquinate synthase (368 aa).

Residues 71–76, 105–109, 129–130, Lys-142, Lys-151, and 169–172 each bind NAD(+); these read DGEAFK, GVVGD, TT, and TLRT. Positions 184, 247, and 264 each coordinate Zn(2+).

It belongs to the sugar phosphate cyclases superfamily. Dehydroquinate synthase family. Requires Co(2+) as cofactor. It depends on Zn(2+) as a cofactor. NAD(+) serves as cofactor.

The protein resides in the cytoplasm. It carries out the reaction 7-phospho-2-dehydro-3-deoxy-D-arabino-heptonate = 3-dehydroquinate + phosphate. It participates in metabolic intermediate biosynthesis; chorismate biosynthesis; chorismate from D-erythrose 4-phosphate and phosphoenolpyruvate: step 2/7. Functionally, catalyzes the conversion of 3-deoxy-D-arabino-heptulosonate 7-phosphate (DAHP) to dehydroquinate (DHQ). This chain is 3-dehydroquinate synthase, found in Cupriavidus pinatubonensis (strain JMP 134 / LMG 1197) (Cupriavidus necator (strain JMP 134)).